Reading from the N-terminus, the 106-residue chain is Glycoprotein GP16 (106 aa).

In terms of processing, glycosylated.

The protein localises to the host cytoplasm. May be involved in formation or transport of the nucleocapsid-containing vesicles around the nuclear membrane. In Autographa californica nuclear polyhedrosis virus (AcMNPV), this protein is Glycoprotein GP16 (GP16).